The sequence spans 292 residues: Phosphatidylserine decarboxylase proenzyme (292 aa).

Active-site charge relay system; for autoendoproteolytic cleavage activity residues include D89, H146, and S252. The active-site Schiff-base intermediate with substrate; via pyruvic acid; for decarboxylase activity is the S252. Pyruvic acid (Ser); by autocatalysis is present on S252.

It belongs to the phosphatidylserine decarboxylase family. PSD-B subfamily. Prokaryotic type I sub-subfamily. In terms of assembly, heterodimer of a large membrane-associated beta subunit and a small pyruvoyl-containing alpha subunit. Pyruvate is required as a cofactor. Post-translationally, is synthesized initially as an inactive proenzyme. Formation of the active enzyme involves a self-maturation process in which the active site pyruvoyl group is generated from an internal serine residue via an autocatalytic post-translational modification. Two non-identical subunits are generated from the proenzyme in this reaction, and the pyruvate is formed at the N-terminus of the alpha chain, which is derived from the carboxyl end of the proenzyme. The autoendoproteolytic cleavage occurs by a canonical serine protease mechanism, in which the side chain hydroxyl group of the serine supplies its oxygen atom to form the C-terminus of the beta chain, while the remainder of the serine residue undergoes an oxidative deamination to produce ammonia and the pyruvoyl prosthetic group on the alpha chain. During this reaction, the Ser that is part of the protease active site of the proenzyme becomes the pyruvoyl prosthetic group, which constitutes an essential element of the active site of the mature decarboxylase.

The protein localises to the cell membrane. It catalyses the reaction a 1,2-diacyl-sn-glycero-3-phospho-L-serine + H(+) = a 1,2-diacyl-sn-glycero-3-phosphoethanolamine + CO2. It participates in phospholipid metabolism; phosphatidylethanolamine biosynthesis; phosphatidylethanolamine from CDP-diacylglycerol: step 2/2. In terms of biological role, catalyzes the formation of phosphatidylethanolamine (PtdEtn) from phosphatidylserine (PtdSer). In Shewanella sp. (strain ANA-3), this protein is Phosphatidylserine decarboxylase proenzyme.